Reading from the N-terminus, the 230-residue chain is DAG protein, chloroplastic (230 aa).

Residues Met1–Ala55 constitute a chloroplast transit peptide. The interval Pro189–Thr230 is disordered. The segment covering Arg197–Val207 has biased composition (basic residues). Over residues Arg208 to Ala224 the composition is skewed to basic and acidic residues.

As to expression, expressed in leaves, flowers including petals, and to a low level in roots.

Its subcellular location is the plastid. It is found in the chloroplast. Acts very early in chloroplast development, being required for expression of RNA polymerase beta subunit gene, and hence indirectly for subsequent expression of CAB and RBCS genes. This Antirrhinum majus (Garden snapdragon) protein is DAG protein, chloroplastic (DAG).